The primary structure comprises 336 residues: COP9 signalosome complex subunit 5 (336 aa).

The 138-residue stretch at 44–181 (VRISSVAMIK…IGAFRTIPEG (138 aa)) folds into the MPN domain. The Zn(2+) site is built by H127, H129, and D140. The JAMM motif signature appears at 127 to 140 (HSHPGYGCWLSGID).

This sequence belongs to the peptidase M67A family. CSN5 subfamily. As to quaternary structure, component of the COP9 signalosome (CSN) complex.

It is found in the cytoplasm. The protein resides in the nucleus. Catalytic component of the COP9 signalosome (CSN) complex that acts as an regulator of the ubiquitin (Ubl) conjugation pathway by mediating the deneddylation of the cullin subunit of SCF-type E3 ubiquitin-protein ligase complexes. The CSN complex is involved in the regulation of the circadian clock through its control of the stability of the SCF(FWD-1) complex. This Neurospora crassa (strain ATCC 24698 / 74-OR23-1A / CBS 708.71 / DSM 1257 / FGSC 987) protein is COP9 signalosome complex subunit 5 (csn-5).